Reading from the N-terminus, the 305-residue chain is Glycine--tRNA ligase alpha subunit (305 aa).

It belongs to the class-II aminoacyl-tRNA synthetase family. In terms of assembly, tetramer of two alpha and two beta subunits.

The protein resides in the cytoplasm. It catalyses the reaction tRNA(Gly) + glycine + ATP = glycyl-tRNA(Gly) + AMP + diphosphate. The polypeptide is Glycine--tRNA ligase alpha subunit (Streptococcus pneumoniae (strain 70585)).